The sequence spans 122 residues: Small ribosomal subunit protein uS13 (122 aa).

The segment at 94-122 (KKLPVRGQRTHTNARTRKGPAKPIAGKKK) is disordered.

It belongs to the universal ribosomal protein uS13 family. As to quaternary structure, part of the 30S ribosomal subunit. Forms a loose heterodimer with protein S19. Forms two bridges to the 50S subunit in the 70S ribosome.

Located at the top of the head of the 30S subunit, it contacts several helices of the 16S rRNA. In the 70S ribosome it contacts the 23S rRNA (bridge B1a) and protein L5 of the 50S subunit (bridge B1b), connecting the 2 subunits; these bridges are implicated in subunit movement. Contacts the tRNAs in the A and P-sites. The chain is Small ribosomal subunit protein uS13 from Hyphomonas neptunium (strain ATCC 15444).